A 269-amino-acid polypeptide reads, in one-letter code: Probable membrane transporter protein YfcA (269 aa).

Residues 1 to 7 (METFNSL) are Periplasmic-facing. A helical transmembrane segment spans residues 8–28 (FMVSPLLLGVLFFVAMLAGFI). Residues 29–30 (DS) lie on the Cytoplasmic side of the membrane. A helical transmembrane segment spans residues 31-51 (IAGGGGLLTIPALMAAGMSPA). At 52 to 84 (NALATNKLQACGGSISATIYFIRRKVVSLSDQK) the chain is on the periplasmic side. Residues 85–105 (LNIAMTFVGSMSGALLVQYVQ) form a helical membrane-spanning segment. Topologically, residues 106–111 (ADVLRQ) are cytoplasmic. A helical membrane pass occupies residues 112 to 132 (ILPILVICIGLYFLLMPKLGE). Topologically, residues 133-156 (EDRQRRMYGLPFALIAGGCVGFYD) are periplasmic. The chain crosses the membrane as a helical span at residues 157 to 177 (GFFGPAAGSFYALAFVTLCGF). The Cytoplasmic portion of the chain corresponds to 178 to 197 (NLAKATAHAKLLNATSNIGG). The helical transmembrane segment at 198–218 (LLLFILGGKVIWATGFVMLVG) threads the bilayer. Residues 219–269 (QFLGARMGSRLVLSKGQKLIRPMIVIVSAVMSAKLLYDSHGQEILHWLGMN) are Periplasmic-facing.

This sequence belongs to the 4-toluene sulfonate uptake permease (TSUP) (TC 2.A.102) family.

The protein resides in the cell inner membrane. This chain is Probable membrane transporter protein YfcA (yfcA), found in Escherichia coli O157:H7.